The primary structure comprises 157 residues: Small ribosomal subunit protein uS7 (157 aa).

It belongs to the universal ribosomal protein uS7 family. Part of the 30S ribosomal subunit. Contacts proteins S9 and S11.

Its function is as follows. One of the primary rRNA binding proteins, it binds directly to 16S rRNA where it nucleates assembly of the head domain of the 30S subunit. Is located at the subunit interface close to the decoding center, probably blocks exit of the E-site tRNA. The sequence is that of Small ribosomal subunit protein uS7 from Chlamydia caviae (strain ATCC VR-813 / DSM 19441 / 03DC25 / GPIC) (Chlamydophila caviae).